A 220-amino-acid polypeptide reads, in one-letter code: MSSLSKEAELVHQALLARGLETPLRKPELDAETRKTRIQAHMTEVMHLLNLDLTDDSLADTPRRIAKMYVDEIFSGLDYENFPKITLIQNKMKVDEMVTVRDITLTSTCEHHFVTIDGKATVAYIPKDSVIGLSKINRIVQFFAQRPQVQERLTQQILLALQTLLGTNNVAVSIDAVHYCVKARGIRDATSATTTTSLGGLFKSSQNTRQEFLRAVRHHG.

Zn(2+) contacts are provided by C109, H112, and C180.

This sequence belongs to the GTP cyclohydrolase I family. Toroid-shaped homodecamer, composed of two pentamers of five dimers.

It catalyses the reaction GTP + H2O = 7,8-dihydroneopterin 3'-triphosphate + formate + H(+). It functions in the pathway cofactor biosynthesis; 7,8-dihydroneopterin triphosphate biosynthesis; 7,8-dihydroneopterin triphosphate from GTP: step 1/1. The chain is GTP cyclohydrolase 1 from Yersinia pseudotuberculosis serotype O:1b (strain IP 31758).